A 550-amino-acid polypeptide reads, in one-letter code: Cell pattern formation-associated protein STUA (550 aa).

The HTH APSES-type domain occupies Arg86 to Pro192. The segment at residues Gly120 to Glu141 is a DNA-binding region (H-T-H motif). A compositionally biased stretch (polar residues) spans Ser246–Gln266. Disordered stretches follow at residues Ser246–Lys277, His371–Arg412, Lys447–Asn467, and Ala527–Gly550. Over residues Arg385 to Arg395 the composition is skewed to basic and acidic residues. The tract at residues Thr517–Gln546 is nuclear localization domain.

The protein belongs to the EFG1/PHD1/stuA family.

It is found in the nucleus. Functionally, transcription factor that regulates asexual reproduction. Binds the StuA-response elements (StRE) with the consensus sequence 5'-(A/T)CGCG(T/A)N(A/C)-3' at the promoters of target genes. Differentially regulates the development of macroconidia, microconidia, and chlamydospores. Acts as a positive regulator for the development of macroconidia and as a negative regulator for the development of chlamydospores. Involved in microconidium formation specifically in infected plants. This is Cell pattern formation-associated protein STUA from Fusarium oxysporum (Fusarium vascular wilt).